An 810-amino-acid polypeptide reads, in one-letter code: Phenylalanine--tRNA ligase beta subunit (810 aa).

The 116-residue stretch at 39 to 154 (APPTEKIVVG…EGTPVGQDIR (116 aa)) folds into the tRNA-binding domain. The B5 domain occupies 405–480 (PQRAPVSMRA…RIYGFEKIPA (76 aa)). Positions 458, 464, 467, and 468 each coordinate Mg(2+). One can recognise an FDX-ACB domain in the interval 707–809 (SKFPPVRRDI…MARVYGARLR (103 aa)).

It belongs to the phenylalanyl-tRNA synthetase beta subunit family. Type 1 subfamily. In terms of assembly, tetramer of two alpha and two beta subunits. The cofactor is Mg(2+).

The protein localises to the cytoplasm. The enzyme catalyses tRNA(Phe) + L-phenylalanine + ATP = L-phenylalanyl-tRNA(Phe) + AMP + diphosphate + H(+). The polypeptide is Phenylalanine--tRNA ligase beta subunit (Burkholderia mallei (strain ATCC 23344)).